The primary structure comprises 381 residues: Prokineticin receptor 2 (381 aa).

At 1–51 (MGPQNRNTSFAPDLNPPQDHVSLNYSYGDYDLPLGEDEDVTKTQTFFAAKI) the chain is on the extracellular side. Residues Asn-7 and Asn-24 are each glycosylated (N-linked (GlcNAc...) asparagine). A helical membrane pass occupies residues 52 to 72 (VIGVALAGIMLVCGIGNFVFI). At 73-86 (AALARYKKLRNLTN) the chain is on the cytoplasmic side. The chain crosses the membrane as a helical span at residues 87–107 (LLIANLAISDFLVAIVCCPFE). Residues 108-133 (MDYYVVRQLSWAHGHVLCASVNYLRT) lie on the Extracellular side of the membrane. A disulfide bridge connects residues Cys-125 and Cys-205. A helical transmembrane segment spans residues 134 to 154 (VSLYVSTNALLAIAIDRYLAI). The Cytoplasmic segment spans residues 155–168 (VHPLKPRMNYQTAS). A helical transmembrane segment spans residues 169-189 (FLIALVWMVSILIAVPSAYFT). At 190–220 (TETILVIVKNQEKIFCGQIWSVDQQLYYKSY) the chain is on the extracellular side. A helical transmembrane segment spans residues 221-241 (FLFVFGLEFVGPVVTMTLCYA). Topologically, residues 242-270 (RISQELWFKAVPGFQTEQIRKRLRCRRKT) are cytoplasmic. A helical transmembrane segment spans residues 271–291 (VLLLMGILTAYVLCWAPFYGF). At 292–310 (TIVRDFFPTVVVKEKHYLT) the chain is on the extracellular side. The chain crosses the membrane as a helical span at residues 311–331 (AFYVVECIAMSNSMINTICFV). Topologically, residues 332 to 381 (TVKNNTMKYFKKMLRLHWRPSHYGSKSSADLDLKTSGVPATEEVDCIRLK) are cytoplasmic.

Belongs to the G-protein coupled receptor 1 family. As to quaternary structure, homodimer. Expressed in several regions of the brain, including paraventricular hypothalamic nucleus, dorsal medial hypothalamic nucleus, paratenial thalamic nuclei, paracentral thalamic nucleus, lateral habenular nucleus, lateral septal nucleus, lateral globus pallidus and amygdala. Highest expression seen in paraventricular thalamic nuclei and is also extensively expressed in the suprachiasmatic nucleus.

It is found in the cell membrane. In terms of biological role, receptor for prokineticin 2. Exclusively coupled to the G(q) subclass of heteromeric G proteins. Activation leads to mobilization of calcium, stimulation of phosphoinositide turnover and activation of p44/p42 mitogen-activated protein kinase. In Mus musculus (Mouse), this protein is Prokineticin receptor 2 (Prokr2).